A 62-amino-acid chain; its full sequence is Large ribosomal subunit protein bL33 (62 aa).

This sequence belongs to the bacterial ribosomal protein bL33 family.

The chain is Large ribosomal subunit protein bL33 from Porphyromonas gingivalis (strain ATCC 33277 / DSM 20709 / CIP 103683 / JCM 12257 / NCTC 11834 / 2561).